The following is a 174-amino-acid chain: Large ribosomal subunit protein uL10 (174 aa).

The protein belongs to the universal ribosomal protein uL10 family. Part of the ribosomal stalk of the 50S ribosomal subunit. The N-terminus interacts with L11 and the large rRNA to form the base of the stalk. The C-terminus forms an elongated spine to which L12 dimers bind in a sequential fashion forming a multimeric L10(L12)X complex.

Forms part of the ribosomal stalk, playing a central role in the interaction of the ribosome with GTP-bound translation factors. The protein is Large ribosomal subunit protein uL10 of Syntrophus aciditrophicus (strain SB).